The sequence spans 428 residues: Dihydroorotase (428 aa).

Zn(2+)-binding residues include H59 and H61. Residues 61–63 and N93 contribute to the substrate site; that span reads HLR. D151, H178, and H231 together coordinate Zn(2+). Residue N277 participates in substrate binding. D304 contributes to the Zn(2+) binding site. The active site involves D304. Residues H308 and 322–323 each bind substrate; that span reads FG.

Belongs to the metallo-dependent hydrolases superfamily. DHOase family. Class I DHOase subfamily. Zn(2+) is required as a cofactor.

It carries out the reaction (S)-dihydroorotate + H2O = N-carbamoyl-L-aspartate + H(+). It participates in pyrimidine metabolism; UMP biosynthesis via de novo pathway; (S)-dihydroorotate from bicarbonate: step 3/3. Catalyzes the reversible cyclization of carbamoyl aspartate to dihydroorotate. This Bacillus cytotoxicus (strain DSM 22905 / CIP 110041 / 391-98 / NVH 391-98) protein is Dihydroorotase.